The following is a 178-amino-acid chain: Ribosome maturation factor RimM (178 aa).

The region spanning 99 to 178 (EGDFYWHDLI…TIEVDWDAGF (80 aa)) is the PRC barrel domain.

The protein belongs to the RimM family. In terms of assembly, binds ribosomal protein uS19.

The protein localises to the cytoplasm. In terms of biological role, an accessory protein needed during the final step in the assembly of 30S ribosomal subunit, possibly for assembly of the head region. Essential for efficient processing of 16S rRNA. May be needed both before and after RbfA during the maturation of 16S rRNA. It has affinity for free ribosomal 30S subunits but not for 70S ribosomes. The sequence is that of Ribosome maturation factor RimM from Mannheimia succiniciproducens (strain KCTC 0769BP / MBEL55E).